The chain runs to 616 residues: Chaperone protein HscA (616 aa).

It belongs to the heat shock protein 70 family.

Chaperone involved in the maturation of iron-sulfur cluster-containing proteins. Has a low intrinsic ATPase activity which is markedly stimulated by HscB. Involved in the maturation of IscU. This Escherichia coli O17:K52:H18 (strain UMN026 / ExPEC) protein is Chaperone protein HscA.